Consider the following 397-residue polypeptide: Izumo sperm-egg fusion protein 1 (397 aa).

An N-terminal signal peptide occupies residues 1 to 21 (MGPHFTLLLAALANCLCPGRP). Cystine bridges form between C22/C149, C25/C152, C135/C159, C139/C165, and C182/C233. Over 22–319 (CIKCDQFVTD…QNPEKKMKTR (298 aa)) the chain is Extracellular. Residues 148–160 (WCLKCEKQLHICR) are important for interaction with IZUMO1R. The Ig-like C2-type domain maps to 167–251 (ERHIEVHRSE…HATVIRYDVT (85 aa)). N-linked (GlcNAc...) asparagine glycosylation occurs at N204. The disordered stretch occupies residues 271–292 (EHETPVHVTPQTPPGQEPESEL). A helical membrane pass occupies residues 320-340 (LLILLTLGFVVLVASIIISVL). The Cytoplasmic portion of the chain corresponds to 341–397 (HFRKVSAKLKNASDEVKPTASGSKSDQSLSQQMGLKKASQADFNSDYSGDKSEATEN). The interval 351–397 (NASDEVKPTASGSKSDQSLSQQMGLKKASQADFNSDYSGDKSEATEN) is disordered. Positions 360–373 (ASGSKSDQSLSQQM) are enriched in polar residues. S379 bears the Phosphoserine mark. The span at 388–397 (SGDKSEATEN) shows a compositional bias: basic and acidic residues.

Belongs to the Izumo family. As to quaternary structure, monomer, homodimer; disulfide-linked and homooligomer; depending on the context. Interacts with IZUMO1R/JUNO. IZUMO1 and IZUMO1R/JUNO form a complex with 1:1 stoichiometry. In gamete recognition, IZUMO1R/JUNO first binds to monomeric IZUMO1. The weak, but specific interaction with IZUMO1R/JUNO induces IZUMO1 homodimerization. The process follows a tight binding phase where IZUMO1 bends the entire structure towards the sperm membrane side through a thiol-disulfide exchange reaction. The molecule no longer binds to IZUMO1R/JUNO and instead binds to a putative second oocyte receptor. Interacts with ACE3. Part of a oolemmal binding multimeric complex (IZUMO1 complex) composed at least of IZUMO1 and GLIPR1L1; the complex assemblage is influenced by the maturation status of the male germ cell. Interacts with GLIPR1L1. Interacts with FREY; the interaction retains IZUMO1 at the endoplasmic reticulum membrane and coordinates IZUMO1 complex assembly. Interacts with WDR54. Forms a complex with SPACA6 and TMEM81 on spermatocyte cell membrane. Post-translationally, N-glycosylated. Glycosylation is not essential for fusion and for proper protein trafficking in sperm. In terms of processing, phosphorylated. The cytoplasmic C-terminus is phosphorylated and undergoes phosphorylation changes during epididymal transit. Sperm-specific (at protein level). Detectable on sperm surface only after the acrosome reaction. Expressed in spermatozoa, more abundantly expressed in the head than the tail (at protein level).

It is found in the cell membrane. The protein resides in the cytoplasmic vesicle. The protein localises to the secretory vesicle. It localises to the acrosome membrane. Its function is as follows. Essential sperm cell-surface protein required for fertilization by acting as a ligand for IZUMO1R/JUNO receptor on egg. The IZUMO1:IZUMO1R/JUNO interaction is a necessary adhesion event between sperm and egg that is required for fertilization but is not sufficient for cell fusion. The ligand-receptor interaction probably does not act as a membrane 'fusogen'. Plays a critical role in sperm-oolemma binding prior to plasma membrane fusion. Can mediate cell-cell fusion in cultured mammalian cells independently of its binding to IZUMO1R/JUNO. This is Izumo sperm-egg fusion protein 1 from Mus musculus (Mouse).